We begin with the raw amino-acid sequence, 404 residues long: Cysteine desulfurase IscS (404 aa).

Pyridoxal 5'-phosphate is bound by residues 75–76 (AT), Asn-155, Gln-183, and 203–205 (SGH). Lys-206 is modified (N6-(pyridoxal phosphate)lysine). Residue Thr-243 participates in pyridoxal 5'-phosphate binding. Residue Cys-328 is the Cysteine persulfide intermediate of the active site. Cys-328 is a binding site for [2Fe-2S] cluster.

It belongs to the class-V pyridoxal-phosphate-dependent aminotransferase family. NifS/IscS subfamily. As to quaternary structure, homodimer. Forms a heterotetramer with IscU, interacts with other sulfur acceptors. Requires pyridoxal 5'-phosphate as cofactor.

It is found in the cytoplasm. It carries out the reaction (sulfur carrier)-H + L-cysteine = (sulfur carrier)-SH + L-alanine. It participates in cofactor biosynthesis; iron-sulfur cluster biosynthesis. Its function is as follows. Master enzyme that delivers sulfur to a number of partners involved in Fe-S cluster assembly, tRNA modification or cofactor biosynthesis. Catalyzes the removal of elemental sulfur atoms from cysteine to produce alanine. Functions as a sulfur delivery protein for Fe-S cluster synthesis onto IscU, an Fe-S scaffold assembly protein, as well as other S acceptor proteins. The protein is Cysteine desulfurase IscS of Edwardsiella ictaluri (strain 93-146).